The sequence spans 291 residues: Polyamine aminopropyltransferase (291 aa).

In terms of domain architecture, PABS spans Pro-5–Leu-245. Residue Gln-36 coordinates S-methyl-5'-thioadenosine. Positions 67 and 91 each coordinate spermidine. S-methyl-5'-thioadenosine is bound by residues Asp-111 and Asp-143 to Gly-144. The Proton acceptor role is filled by Asp-164.

It belongs to the spermidine/spermine synthase family. In terms of assembly, homodimer or homotetramer.

The protein resides in the cytoplasm. The enzyme catalyses S-adenosyl 3-(methylsulfanyl)propylamine + putrescine = S-methyl-5'-thioadenosine + spermidine + H(+). It participates in amine and polyamine biosynthesis; spermidine biosynthesis; spermidine from putrescine: step 1/1. Functionally, catalyzes the irreversible transfer of a propylamine group from the amino donor S-adenosylmethioninamine (decarboxy-AdoMet) to putrescine (1,4-diaminobutane) to yield spermidine. The sequence is that of Polyamine aminopropyltransferase from Pyrobaculum islandicum (strain DSM 4184 / JCM 9189 / GEO3).